We begin with the raw amino-acid sequence, 152 residues long: Ribosome maturation factor RimP (152 aa).

The protein belongs to the RimP family.

The protein localises to the cytoplasm. Required for maturation of 30S ribosomal subunits. In Pectobacterium atrosepticum (strain SCRI 1043 / ATCC BAA-672) (Erwinia carotovora subsp. atroseptica), this protein is Ribosome maturation factor RimP.